Here is a 538-residue protein sequence, read N- to C-terminus: Guanine nucleotide-binding protein-like 3 (538 aa).

A compositionally biased stretch (basic residues) spans 1-45 (MKRPKLKKASKRMTCHKRYKIQKKVREHHRKLRKEAKKRGHKKPR). 2 disordered regions span residues 1–57 (MKRP…APFK) and 69–126 (QQLE…NPKK). The interval 2-46 (KRPKLKKASKRMTCHKRYKIQKKVREHHRKLRKEAKKRGHKKPRK) is basic. Residues 54–95 (APFKEALLREAELRKQQLEELKQQQKLDRQKEQERKRKLEVS) are a coiled coil. The span at 69–93 (QQLEELKQQQKLDRQKEQERKRKLE) shows a compositional bias: basic and acidic residues. At Lys-79 the chain carries N6-acetyllysine. A Glycyl lysine isopeptide (Lys-Gly) (interchain with G-Cter in SUMO2) cross-link involves residue Lys-91. Residues Ser-95 and Ser-101 each carry the phosphoserine modification. Residues 114-126 (RKKAKAGKQNPKK) show a composition bias toward basic residues. A CP-type G domain is found at 129–307 (CQELKKVIEA…IIDSPCLIIS (179 aa)). 176–179 (NKSD) contacts GTP. Glycyl lysine isopeptide (Lys-Gly) (interchain with G-Cter in SUMO2) cross-links involve residues Lys-177, Lys-248, Lys-262, and Lys-270. Residue 256–263 (GFPNVGKS) participates in GTP binding. Positions 277–451 (VGISMGLTRS…HLTNRILFRS (175 aa)) are intermediate. GTP is bound at residue 300–303 (DSPC). A compositionally biased stretch (basic and acidic residues) spans 460 to 475 (DEKDIVEESPRQTEDK). The tract at residues 460-532 (DEKDIVEESP…RASQEDETYD (73 aa)) is acidic. The tract at residues 460 to 538 (DEKDIVEESP…ETYDFTTDYI (79 aa)) is disordered. Residues Ser-493, Ser-505, and Ser-518 each carry the phosphoserine modification. The span at 506–518 (PEQSTAGKPSDGS) shows a compositional bias: polar residues.

It belongs to the TRAFAC class YlqF/YawG GTPase family. Interacts with MDM2; this interaction stabilizes MDM2. Interaction with MDM2 occurs in the nucleoplasm and is triggered by a nucleolar release mechanism, such as mitosis-induced nucleolar disassembly. Indirectly interacts with TP53, via MDM2-binding. Interacts with TSC22D1 isoform 2. In terms of tissue distribution, expressed in the adult bone marrow population that is enriched in hematopoietic stem cells.

It is found in the nucleus. Its subcellular location is the nucleolus. Functionally, may be required to maintain the proliferative capacity of stem cells. Stabilizes MDM2 by preventing its ubiquitination, and hence proteasomal degradation. This Mus musculus (Mouse) protein is Guanine nucleotide-binding protein-like 3 (Gnl3).